Consider the following 144-residue polypeptide: MSNLFKEVRKLIYIIVGIAGILGALSRYYLGLNITTFWHHSFPLATLLINLIGCFFLAWLTTYIARLNILPSEVITGIGTGFIGSFTTFSTFSVETVQLINHSEWSIAFLYVSCSILGGLIMSGLGYTLGDFLIKKSLTEGDYS.

The next 4 membrane-spanning stretches (helical) occupy residues 11–31, 44–64, 74–94, and 107–127; these read LIYI…YYLG, LATL…TTYI, VITG…TFSV, and IAFL…GLGY. 2 residues coordinate Na(+): Gly-84 and Thr-87.

This sequence belongs to the fluoride channel Fluc/FEX (TC 1.A.43) family.

Its subcellular location is the cell membrane. The enzyme catalyses fluoride(in) = fluoride(out). Na(+) is not transported, but it plays an essential structural role and its presence is essential for fluoride channel function. Functionally, fluoride-specific ion channel. Important for reducing fluoride concentration in the cell, thus reducing its toxicity. This chain is Fluoride-specific ion channel FluC 1, found in Bacillus cereus (strain ATCC 14579 / DSM 31 / CCUG 7414 / JCM 2152 / NBRC 15305 / NCIMB 9373 / NCTC 2599 / NRRL B-3711).